We begin with the raw amino-acid sequence, 879 residues long: Autophagy-related protein 9 (879 aa).

Positions 1–56 are disordered; it reads MGKGEGYLDPTILSVASGSRNSGKGKERTRRKGGHKYHSLHVQDEEEEEPPESDAL. Basic residues predominate over residues 27–39; that stretch reads ERTRRKGGHKYHS. The helical transmembrane segment at 104-124 threads the bilayer; that stretch reads VLNLLTTFFVIAFSTFLISCI. Residues Asn-163 and Asn-166 are each glycosylated (N-linked (GlcNAc...) asparagine). The helical transmembrane segment at 180–200 threads the bilayer; the sequence is LFLIILSAFFIFQVASFAMSV. An intramembrane segment occupies 385-405; sequence FIFMGILNAIFAPFIILYLLI. 2 helical membrane passes run 455–475 and 488–508; these read FVAF…LIDP and TVLF…GMVP. The stretch at 555–575 is an intramembrane region; it reads IMIFFSELLSVILTPFILFFS. Disordered regions lie at residues 620-666 and 763-825; these read ETGL…DWRG and WAKS…EEER. A compositionally biased stretch (low complexity) spans 632–657; sequence GPAADGFAAGKPSRPTTRRTTSSSPS. Basic and acidic residues predominate over residues 798–817; that stretch reads EGDKGDDSIDGWSKRVKTDG.

Belongs to the ATG9 family. As to quaternary structure, homotrimer; forms a homotrimer with a central pore that forms a path between the two membrane leaflets. Post-translationally, phosphorylated by ATG1. ATG1 phosphorylation is required for preautophagosome elongation.

It is found in the preautophagosomal structure membrane. The protein localises to the cytoplasmic vesicle membrane. The protein resides in the golgi apparatus membrane. Its subcellular location is the endoplasmic reticulum membrane. The catalysed reaction is a 1,2-diacyl-sn-glycero-3-phosphocholine(in) = a 1,2-diacyl-sn-glycero-3-phosphocholine(out). It carries out the reaction a 1,2-diacyl-sn-glycero-3-phospho-L-serine(in) = a 1,2-diacyl-sn-glycero-3-phospho-L-serine(out). It catalyses the reaction a 1,2-diacyl-sn-glycero-3-phosphoethanolamine(in) = a 1,2-diacyl-sn-glycero-3-phosphoethanolamine(out). The enzyme catalyses a 1,2-diacyl-sn-glycero-3-phospho-(1D-myo-inositol-3-phosphate)(in) = a 1,2-diacyl-sn-glycero-3-phospho-(1D-myo-inositol-3-phosphate)(out). Phospholipid scramblase involved in autophagy and cytoplasm to vacuole transport (Cvt) vesicle formation. Cycles between the preautophagosomal structure/phagophore assembly site (PAS) and the cytoplasmic vesicle pool and supplies membrane for the growing autophagosome. Lipid scramblase activity plays a key role in preautophagosomal structure/phagophore assembly by distributing the phospholipids that arrive through ATG2 from the cytoplasmic to the luminal leaflet of the bilayer, thereby driving autophagosomal membrane expansion. Required for mitophagy. Also involved in endoplasmic reticulum-specific autophagic process and is essential for the survival of cells subjected to severe ER stress. Different machineries are required for anterograde trafficking to the PAS during either the Cvt pathway or bulk autophagy and for retrograde trafficking. The sequence is that of Autophagy-related protein 9 (ATG9) from Cryptococcus neoformans var. neoformans serotype D (strain B-3501A) (Filobasidiella neoformans).